The primary structure comprises 597 residues: Translation initiation factor IF-2 (597 aa).

2 stretches are compositionally biased toward low complexity: residues 57-73 (GGDA…AATA) and 81-95 (TPAA…PASD). The tract at residues 57–96 (GGDAAPAAASAPAAATAEPEEADETPAAAAQADAEPASDL) is disordered. A tr-type G domain is found at 98–271 (HRAPVVTIMG…ELEDLRADPK (174 aa)). A G1 region spans residues 107–114 (GHVDHGKT). Residue 107–114 (GHVDHGKT) participates in GTP binding. The tract at residues 132–136 (GITQH) is G2. The segment at 153–156 (DTPG) is G3. Residues 153–157 (DTPGH) and 207–210 (NKVD) each bind GTP. Residues 207-210 (NKVD) are G4. The G5 stretch occupies residues 243–245 (SAK).

It belongs to the TRAFAC class translation factor GTPase superfamily. Classic translation factor GTPase family. IF-2 subfamily.

It localises to the cytoplasm. Its function is as follows. One of the essential components for the initiation of protein synthesis. Protects formylmethionyl-tRNA from spontaneous hydrolysis and promotes its binding to the 30S ribosomal subunits. Also involved in the hydrolysis of GTP during the formation of the 70S ribosomal complex. This Deinococcus radiodurans (strain ATCC 13939 / DSM 20539 / JCM 16871 / CCUG 27074 / LMG 4051 / NBRC 15346 / NCIMB 9279 / VKM B-1422 / R1) protein is Translation initiation factor IF-2.